The primary structure comprises 789 residues: MAADWEEIRRLAADFQRAQFAEAAHRLSERNCIEIVTKLIAEKQLEVVHTLDGKEYVTPAQISKEIWDELSVCGGRINIVDLQQIINVDLLHIENRANDIVKSDKAVQLVLGQLINESYLDQLAEEINDKLQETGQVTISELCKAYDLPGDFLTQALSKRLGRIIHGRLDQENRGVIFTEAFVSRHRARIRGLFSAITRPTPVSNLITRYGFQEHLLYSVLEELVNTSRLKGTVVGGKQDKAVFVPDIYARTQSNWVDSFFKQNGYLEFDALYRLGIPDPAGYIKKRYKSTKLLFLRAACVGQEIVDRVEASVDEVISSGSWIDVATLLPSSLSVEDIGILLQQVMRSLNKNSSGLVFSDTIVVSEKFISSCTDLFSDMMKQKAEKEMKNSPVHLITEEDLKQSYVLENSYTNKKDKKDERRKKATEGSGSVRGGGGGNAREIKIKKTKKKGRKDADSDEESQATGTGRNKQLEFHFMSQEEMQDVLKTHLQDCPEELITELAEHLMRPLTKSYQEVVRSVFTSSTSSSGASGRQTMKDLQEEFSNLYNNIRLFEKGTKYFTDETQTNLAKHLLKTVCTDITNLIFNFLASDSMMTTENYSTITSEVRTKILGKLPEDTRGPLTKLHTSLNGKSLEDFLSYLDAAADICDIMVKKGDKKKERQVLFQHRQALIEQLKVTEDPALVLHLTAVLLFQFSTHCMLHAPGRSVPQIINFLSGKIPEDQHSLLIKYQGLVVKQLISQSKKAEQEDDNKTEEEEGADTIRKELQEITTSVKDLVLRPRKSSVTEE.

Residues 2–212 form a required for E3 UFM1-protein ligase activity region; it reads AADWEEIRRL…VSNLITRYGF (211 aa). 2 disordered regions span residues 407–470 and 743–763; these read LENS…TGRN and SKKA…ADTI. A compositionally biased stretch (basic residues) spans 444–453; sequence KIKKTKKKGR. Residues 748–760 show a composition bias toward acidic residues; that stretch reads QEDDNKTEEEEGA.

This sequence belongs to the UFL1 family. As to quaternary structure, catalytic component of the UFM1 ribosome E3 ligase (UREL) complex. Interacts with E2-like enzyme UFC1.

The protein localises to the endoplasmic reticulum membrane. The protein resides in the cytoplasm. Its subcellular location is the cytosol. It is found in the nucleus. It localises to the chromosome. Functionally, E3 protein ligase that mediates ufmylation, the covalent attachment of the ubiquitin-like modifier UFM1 to lysine residues on target proteins, and which plays a key role in various processes, such as ribosome recycling, response to DNA damage, interferon response or reticulophagy (also called ER-phagy). As part of the UREL complex, plays a key role in ribosome recycling by catalyzing mono-ufmylation of RPL26/uL24 subunit of the 60S ribosome. Ufmylation of RPL26/uL24 occurs on free 60S ribosomes following ribosome dissociation: it weakens the junction between post-termination 60S subunits and SEC61 translocons, promoting release and recycling of the large ribosomal subunit from the endoplasmic reticulum membrane. Ufmylation of RPL26/uL24 and subsequent 60S ribosome recycling either take place after normal termination of translation or after ribosome stalling during cotranslational translocation at the endoplasmic reticulum. Involved in reticulophagy in response to endoplasmic reticulum stress by mediating ufmylation of proteins such as CYB5R3 and RPN1, thereby promoting lysosomal degradation of ufmylated proteins. Ufmylation in response to endoplasmic reticulum stress is essential for processes such as hematopoiesis, blood vessel morphogenesis or inflammatory response. This is E3 UFM1-protein ligase 1 from Gallus gallus (Chicken).